The chain runs to 609 residues: Interleukin-1 receptor-associated kinase 3 (609 aa).

The 66-residue stretch at 41-106 (WRGLAERLSN…RAIHLIINYG (66 aa)) folds into the Death domain. T110 is subject to Phosphothreonine. Residues 178–463 (FHKDFLIGEG…SSLESTQPSL (286 aa)) form the Protein kinase domain. ATP contacts are provided by residues 184-192 (IGEGEIFEV), K205, 308-311 (SSAN), and D324. S480 is subject to Phosphoserine.

The protein belongs to the protein kinase superfamily. TKL Ser/Thr protein kinase family. Pelle subfamily. Monomer. Homodimer. May interact with IRAK4 (when phosphorylated). Interacts (when phosphorylated at Thr-110) with PIN1 (via WW domain) in response to IL33-mediated (but not TLR4 ligand LPS) dendritic cell stimulation. In terms of tissue distribution, expressed in inflamed lung macrophages (at protein level). Expressed in dendritic cells (at protein level). Highly expressed in liver and thymus and at lower levels in heart, brain, spleen and kidney.

It localises to the cytoplasm. It is found in the nucleus. Functionally, putative inactive protein kinase which regulates signaling downstream of immune receptors including IL1R and Toll-like receptors. Inhibits dissociation of IRAK1 and IRAK4 from the Toll-like receptor signaling complex by either inhibiting the phosphorylation of IRAK1 and IRAK4 or stabilizing the receptor complex. Upon IL33-induced lung inflammation, positively regulates expression of IL6, CSF3, CXCL2 and CCL5 mRNAs in dendritic cells. This Mus musculus (Mouse) protein is Interleukin-1 receptor-associated kinase 3.